The following is a 303-amino-acid chain: Protein REVEILLE 5 (303 aa).

The HTH myb-type domain occupies 54–108; it reads TIKKSRENWTDQEHDKFLEALHLFDRDWKKIEAFVGSKTVVQIRSHAQKYFLKVQ. The segment at residues 81 to 104 is a DNA-binding region (H-T-H motif); that stretch reads WKKIEAFVGSKTVVQIRSHAQKYF. A disordered region spans residues 109-130; sequence KSGANEHLPPPRPKRKASHPYP.

It is found in the nucleus. Its function is as follows. Probable transcription factor. In Arabidopsis thaliana (Mouse-ear cress), this protein is Protein REVEILLE 5 (RVE5).